The chain runs to 508 residues: Arabinose import ATP-binding protein AraG (508 aa).

2 ABC transporter domains span residues 5–240 and 250–496; these read LEFQ…MVGR and ARTL…LPDA. An ATP-binding site is contributed by 37–44; sequence GENGAGKS.

The protein belongs to the ABC transporter superfamily. Arabinose importer (TC 3.A.1.2.2) family. As to quaternary structure, the complex is composed of two ATP-binding proteins (AraG), two transmembrane proteins (AraH) and a solute-binding protein (AraF).

The protein resides in the cell inner membrane. It carries out the reaction L-arabinose(out) + ATP + H2O = L-arabinose(in) + ADP + phosphate + H(+). Functionally, part of the ABC transporter complex AraFGH involved in arabinose import. Responsible for energy coupling to the transport system. The chain is Arabinose import ATP-binding protein AraG from Rhizobium meliloti (strain 1021) (Ensifer meliloti).